A 130-amino-acid chain; its full sequence is DNA-directed RNA polymerase subunit omega (130 aa).

Residues 107–130 (SLDVSQESHDDEIDDQDSGEEVPI) form a disordered region. The segment covering 115–130 (HDDEIDDQDSGEEVPI) has biased composition (acidic residues).

Belongs to the RNA polymerase subunit omega family. The RNAP catalytic core consists of 2 alpha, 1 beta, 1 beta' and 1 omega subunit. When a sigma factor is associated with the core the holoenzyme is formed, which can initiate transcription.

It catalyses the reaction RNA(n) + a ribonucleoside 5'-triphosphate = RNA(n+1) + diphosphate. Promotes RNA polymerase assembly. Latches the N- and C-terminal regions of the beta' subunit thereby facilitating its interaction with the beta and alpha subunits. The polypeptide is DNA-directed RNA polymerase subunit omega (Wolbachia pipientis subsp. Culex pipiens (strain wPip)).